The primary structure comprises 145 residues: 3-hydroxyacyl-[acyl-carrier-protein] dehydratase FabZ (145 aa).

His-47 is a catalytic residue.

Belongs to the thioester dehydratase family. FabZ subfamily.

The protein resides in the cytoplasm. It catalyses the reaction a (3R)-hydroxyacyl-[ACP] = a (2E)-enoyl-[ACP] + H2O. Its function is as follows. Involved in unsaturated fatty acids biosynthesis. Catalyzes the dehydration of short chain beta-hydroxyacyl-ACPs and long chain saturated and unsaturated beta-hydroxyacyl-ACPs. This chain is 3-hydroxyacyl-[acyl-carrier-protein] dehydratase FabZ, found in Polaromonas sp. (strain JS666 / ATCC BAA-500).